Consider the following 303-residue polypeptide: 2-dehydropantoate 2-reductase (303 aa).

NADP(+) is bound by residues 7 to 12 (GPGSLG), Lys-78, Asn-103, and Ala-129. The active-site Proton donor is Lys-185. Residues Lys-185, Asn-189, Asn-193, Asn-203, and 252 to 255 (NESS) contribute to the substrate site. Glu-267 serves as a coordination point for NADP(+).

This sequence belongs to the ketopantoate reductase family.

The protein resides in the cytoplasm. It catalyses the reaction (R)-pantoate + NAD(+) = 2-dehydropantoate + NADH + H(+). It carries out the reaction (R)-pantoate + NADP(+) = 2-dehydropantoate + NADPH + H(+). It participates in cofactor biosynthesis; coenzyme A biosynthesis. Its function is as follows. Catalyzes the NAD(P)H-dependent reduction of ketopantoate into pantoic acid. In Halobacterium salinarum (strain ATCC 700922 / JCM 11081 / NRC-1) (Halobacterium halobium), this protein is 2-dehydropantoate 2-reductase.